A 407-amino-acid polypeptide reads, in one-letter code: L-amino-acid oxidase (407 aa).

A disulfide bond links Cys10 and Cys94. N-linked (GlcNAc...) asparagine glycosylation occurs at Asn93. His144 contributes to the substrate binding site. FAD is bound at residue Val182. Cys252 and Cys333 are oxidised to a cystine. The N-linked (GlcNAc...) asparagine glycan is linked to Asn282. Tyr293 serves as a coordination point for substrate. FAD contacts are provided by residues Glu378 and 385–390 (GWIDST). 385 to 386 (GW) contacts substrate.

The protein belongs to the flavin monoamine oxidase family. FIG1 subfamily. Homodimer; non-covalently linked. It depends on FAD as a cofactor. As to expression, expressed by the venom gland.

The protein resides in the secreted. It carries out the reaction an L-alpha-amino acid + O2 + H2O = a 2-oxocarboxylate + H2O2 + NH4(+). The enzyme catalyses L-leucine + O2 + H2O = 4-methyl-2-oxopentanoate + H2O2 + NH4(+). The catalysed reaction is L-phenylalanine + O2 + H2O = 3-phenylpyruvate + H2O2 + NH4(+). It catalyses the reaction L-isoleucine + O2 + H2O = (S)-3-methyl-2-oxopentanoate + H2O2 + NH4(+). It carries out the reaction L-aspartate + O2 + H2O = oxaloacetate + H2O2 + NH4(+). The enzyme catalyses L-lysine + O2 + H2O = 6-amino-2-oxohexanoate + H2O2 + NH4(+). The catalysed reaction is L-glutamate + O2 + H2O = H2O2 + 2-oxoglutarate + NH4(+). Its function is as follows. Catalyzes an oxidative deamination of predominantly hydrophobic and aromatic L-amino acids, thus producing hydrogen peroxide that may contribute to the diverse toxic effects of this enzyme. Is highly active on L-Leu followed by L-Phe and L-Ile, moderately active on L-Asp, L-Glu, and L-Lys, and not active on L-Pro, L-Asn, L-Gly, L-Ser and L-Cys. Exhibits diverse biological activities such as antibacterial activity (Minimal inhibitory concentrations (MIC) are 9.0 ug/ml against S.aureus, 144.0 ug/ml against P.aeruginosa and 288.0 ug/ml against E.coli) and inhibition of ADP- and TMVA-induced platelet aggregation. Effects of snake L-amino oxidases on platelets are controversial, since they either induce aggregation or inhibit agonist-induced aggregation. These different effects are probably due to different experimental conditions. Unlike other snake venom L-amino acid oxidases, does not induce hemorrhage. This protein may also induce hemolysis, edema, apoptosis and have antiparasitic activities. The sequence is that of L-amino-acid oxidase from Daboia siamensis (Eastern Russel's viper).